Reading from the N-terminus, the 791-residue chain is Metabotropic glutamate receptor-like protein D (791 aa).

Positions 1-22 are cleaved as a signal peptide; it reads MKINSFLIILILLFISIKNSNG. The Extracellular portion of the chain corresponds to 23–390; sequence EPEKKFKLIT…TEVYQSRPIQ (368 aa). Asn72, Asn168, Asn279, Asn290, Asn306, and Asn349 each carry an N-linked (GlcNAc...) asparagine glycan. Residues 391 to 411 form a helical membrane-spanning segment; the sequence is IAISSISSFFIVTVLVMMGLV. Residues 412–424 lie on the Cytoplasmic side of the membrane; that stretch reads VRFRKNPSIRSAS. The chain crosses the membrane as a helical span at residues 425 to 445; sequence PIFLNFILFGALIIYVGIIIW. Residues 446-453 are Extracellular-facing; sequence SSSINSAS. The helical transmembrane segment at 454–474 threads the bilayer; the sequence is CNAQFWLVTLGFTTLIGSLVV. Residues 475–495 are Cytoplasmic-facing; sequence KNVRIWLIFDNPELKLVKITN. A helical membrane pass occupies residues 496–516; that stretch reads LQLVPWVGVCLVINIILMSIL. The Extracellular portion of the chain corresponds to 517 to 550; sequence TSVGDLREVNAQGIDSLGKYEFMRICKMNSSGAS. Asn545 carries N-linked (GlcNAc...) asparagine glycosylation. Residues 551 to 571 form a helical membrane-spanning segment; sequence TLYTILAYFAALLLIGVFVSW. Topologically, residues 572 to 585 are cytoplasmic; the sequence is KIRIVDILEFNESK. A helical membrane pass occupies residues 586-606; that stretch reads AIANTLYAISFCLFVIVPLMI. Topologically, residues 607–615 are extracellular; the sequence is SPQDKQSEK. The helical transmembrane segment at 616–636 threads the bilayer; that stretch reads IILCIAGLFIVTAAVLIIFVP. Topologically, residues 637 to 791 are cytoplasmic; sequence KFYRVYIFGS…KNEENNDGDN (155 aa). Disordered stretches follow at residues 664–715 and 746–791; these read TARA…SEPN and IITE…DGDN. Residues 674–689 are compositionally biased toward gly residues; the sequence is SSGGGAGSGGATGGSG. Low complexity predominate over residues 749 to 760; sequence ENGQDSNNNNNN. Positions 752-781 form a coiled coil; that stretch reads QDSNNNNNNEENKDNNIENNKISEEIKENL. Residues 761 to 785 show a composition bias toward basic and acidic residues; sequence EENKDNNIENNKISEEIKENLKNEE.

This sequence in the N-terminal section; belongs to the BMP lipoprotein family. In the C-terminal section; belongs to the G-protein coupled receptor 3 family. GABA-B receptor subfamily.

Its subcellular location is the membrane. The protein is Metabotropic glutamate receptor-like protein D (grlD) of Dictyostelium discoideum (Social amoeba).